A 205-amino-acid chain; its full sequence is Guanylate kinase (205 aa).

The Guanylate kinase-like domain occupies 7-185; it reads GNIFIISAAS…AEGDLLHIVN (179 aa). 14–21 provides a ligand contact to ATP; the sequence is AASGTGKT.

The protein belongs to the guanylate kinase family.

The protein resides in the cytoplasm. The enzyme catalyses GMP + ATP = GDP + ADP. Essential for recycling GMP and indirectly, cGMP. This chain is Guanylate kinase, found in Neisseria gonorrhoeae (strain ATCC 700825 / FA 1090).